The following is a 476-amino-acid chain: ATP synthase subunit beta, chloroplastic (476 aa).

155–162 (GGAGVGKT) is an ATP binding site.

It belongs to the ATPase alpha/beta chains family. In terms of assembly, F-type ATPases have 2 components, CF(1) - the catalytic core - and CF(0) - the membrane proton channel. CF(1) has five subunits: alpha(3), beta(3), gamma(1), delta(1), epsilon(1). CF(0) has four main subunits: a(1), b(1), b'(1) and c(9-12).

Its subcellular location is the plastid. The protein resides in the chloroplast thylakoid membrane. The enzyme catalyses ATP + H2O + 4 H(+)(in) = ADP + phosphate + 5 H(+)(out). Functionally, produces ATP from ADP in the presence of a proton gradient across the membrane. The catalytic sites are hosted primarily by the beta subunits. The sequence is that of ATP synthase subunit beta, chloroplastic from Emiliania huxleyi (Coccolithophore).